The following is a 1436-amino-acid chain: Inositol hexakisphosphate and diphosphoinositol-pentakisphosphate kinase 1 (1436 aa).

64–65 (KK) provides a ligand contact to substrate. Residues Arg145, Lys198, His205, Arg224, 248–251 (EEFM), and 257–259 (DVK) contribute to the ATP site. Substrate is bound at residue 224-225 (RK). Substrate contacts are provided by Lys259 and Arg273. ATP-binding positions include Ser275, Asp320, and 332 to 334 (DVN). Residue 337–340 (SFVK) coordinates substrate. Residues 382–453 (PTTSGTMMEL…VLDITRLLLA (72 aa)) form a polyphosphoinositide-binding domain region. Positions 915-998 (GSAPAGCGFR…TSSSRPGGYR (84 aa)) are disordered. A phosphoserine mark is found at Ser939, Ser982, Ser1032, Ser1068, Ser1140, and Ser1147. Disordered regions lie at residues 1131 to 1191 (NHQA…GFSD) and 1389 to 1436 (SELS…EAIS). The segment covering 1163-1181 (SSGPSSTVSSAGPSSPTTV) has biased composition (low complexity). Over residues 1405–1436 (LSEETELQAQEVSEEIDQESEVVDELPPEAIS) the composition is skewed to acidic residues.

It belongs to the histidine acid phosphatase family. VIP1 subfamily.

The protein resides in the cytoplasm. It localises to the cytosol. The protein localises to the cell membrane. The enzyme catalyses 1D-myo-inositol hexakisphosphate + ATP = 1-diphospho-1D-myo-inositol 2,3,4,5,6-pentakisphosphate + ADP. The catalysed reaction is 5-diphospho-1D-myo-inositol 1,2,3,4,6-pentakisphosphate + ATP + H(+) = 1,5-bis(diphospho)-1D-myo-inositol 2,3,4,6-tetrakisphosphate + ADP. Functionally, bifunctional inositol kinase that acts in concert with the IP6K kinases IP6K1, IP6K2 and IP6K3 to synthesize the diphosphate group-containing inositol pyrophosphates diphosphoinositol pentakisphosphate, PP-InsP5, and bis-diphosphoinositol tetrakisphosphate, (PP)2-InsP4. PP-InsP5 and (PP)2-InsP4, also respectively called InsP7 and InsP8, regulate a variety of cellular processes, including apoptosis, vesicle trafficking, cytoskeletal dynamics, exocytosis, insulin signaling and neutrophil activation. Phosphorylates inositol hexakisphosphate (InsP6) at position 1 to produce PP-InsP5 which is in turn phosphorylated by IP6Ks to produce (PP)2-InsP4. Alternatively, phosphorylates PP-InsP5 at position 1, produced by IP6Ks from InsP6, to produce (PP)2-InsP4. Activated when cells are exposed to hyperosmotic stress. This is Inositol hexakisphosphate and diphosphoinositol-pentakisphosphate kinase 1 from Mus musculus (Mouse).